A 173-amino-acid polypeptide reads, in one-letter code: MKLIKFLGGVVFFTLMFSGYSEQNQVNVLCSTDWFMVTVHPFLLNNDVFVHFYEVHLGLGCPPNHIHPHFYQFNYRVTECGIRIKAVSPDVVIYSSEIHYASKGSSARYVIPVSCAAPRRSPWLTKPYSAKAPSSNMGATPKNDTSYHVFTLPEPSQQPNCSCPPYVFNQKSM.

A signal peptide spans 1–23 (MKLIKFLGGVVFFTLMFSGYSEQ).

It belongs to the PLAC1 family.

It is found in the secreted. Functionally, may play a role in placental development. This is Placenta-specific protein 1 from Rattus norvegicus (Rat).